A 340-amino-acid chain; its full sequence is Protein RecA (340 aa).

65–72 (GPESGGKT) is a binding site for ATP.

It belongs to the RecA family.

It localises to the cytoplasm. Functionally, can catalyze the hydrolysis of ATP in the presence of single-stranded DNA, the ATP-dependent uptake of single-stranded DNA by duplex DNA, and the ATP-dependent hybridization of homologous single-stranded DNAs. It interacts with LexA causing its activation and leading to its autocatalytic cleavage. This is Protein RecA from Thermus thermophilus.